The sequence spans 596 residues: Elongation factor 4 (596 aa).

In terms of domain architecture, tr-type G spans 2–184; the sequence is RNIRNFSIIA…AIVHRIPPPK (183 aa). GTP-binding positions include 14–19 and 131–134; these read DHGKST and NKID.

This sequence belongs to the TRAFAC class translation factor GTPase superfamily. Classic translation factor GTPase family. LepA subfamily.

The protein resides in the cell inner membrane. It catalyses the reaction GTP + H2O = GDP + phosphate + H(+). Its function is as follows. Required for accurate and efficient protein synthesis under certain stress conditions. May act as a fidelity factor of the translation reaction, by catalyzing a one-codon backward translocation of tRNAs on improperly translocated ribosomes. Back-translocation proceeds from a post-translocation (POST) complex to a pre-translocation (PRE) complex, thus giving elongation factor G a second chance to translocate the tRNAs correctly. Binds to ribosomes in a GTP-dependent manner. This is Elongation factor 4 from Xanthomonas euvesicatoria pv. vesicatoria (strain 85-10) (Xanthomonas campestris pv. vesicatoria).